Here is a 688-residue protein sequence, read N- to C-terminus: Elongation factor G (688 aa).

A tr-type G domain is found at 8-282 (DKFRNFGIMA…GVVDYLPSPL (275 aa)). Residues 17 to 24 (AHIDAGKT), 81 to 85 (DTPGH), and 135 to 138 (NKMD) each bind GTP.

This sequence belongs to the TRAFAC class translation factor GTPase superfamily. Classic translation factor GTPase family. EF-G/EF-2 subfamily.

It is found in the cytoplasm. In terms of biological role, catalyzes the GTP-dependent ribosomal translocation step during translation elongation. During this step, the ribosome changes from the pre-translocational (PRE) to the post-translocational (POST) state as the newly formed A-site-bound peptidyl-tRNA and P-site-bound deacylated tRNA move to the P and E sites, respectively. Catalyzes the coordinated movement of the two tRNA molecules, the mRNA and conformational changes in the ribosome. The chain is Elongation factor G from Clostridium botulinum (strain Alaska E43 / Type E3).